A 192-amino-acid chain; its full sequence is UPF0149 protein Spro_3920 (192 aa).

This sequence belongs to the UPF0149 family.

This Serratia proteamaculans (strain 568) protein is UPF0149 protein Spro_3920.